The sequence spans 1226 residues: E3 ubiquitin-protein ligase mind-bomb (1226 aa).

A compositionally biased stretch (polar residues) spans 1–12 (MSCAATLSSAKD). Disordered regions lie at residues 1-42 (MSCA…NTNT) and 66-87 (GGGGSLPGGTTSSSSASAAGGV). The span at 19-30 (SGGGGGGGGGGA) shows a compositional bias: gly residues. 2 stretches are compositionally biased toward low complexity: residues 31 to 42 (PTNSNTNTNTNT) and 73 to 86 (GGTTSSSSASAAGG). Residues 100 to 168 (VRRFSMEGVG…AYDLRILDSA (69 aa)) enclose the MIB/HERC2 1 domain. A ZZ-type zinc finger spans residues 174–226 (HEGTMCDTCRQQPIFGIRWKCAECINYDLCSICYHGDKHHLRHRFYRITTPGG). 8 residues coordinate Zn(2+): Cys-179, Cys-182, Cys-194, Cys-197, Cys-203, Cys-206, His-212, and His-216. The 79-residue stretch at 237 to 315 (SKKVLARGIF…MADLKVVNDA (79 aa)) folds into the MIB/HERC2 2 domain. 8 ANK repeats span residues 567 to 596 (AGHTALQAASQNGHIEVIQVLLRHAVDVEI), 600 to 629 (DGDRAVHHAAFGDEAAVIEILAKAGADLNA), 633 to 662 (RRQTSLHIAVNKGHLNVVKTLLTLGCHPSL), 666 to 695 (EGDTPLHDAISKEHDEMLSLLLDFGADITL), 699 to 731 (NGFNALHHAALKGNPSAMKILLTKTNRPWIVEE), 735 to 765 (DGYTALHLAALNNHVEIAELLVHMGKANMDR), 769 to 798 (NLQTALHLAVERQHVQIVKLLVQDGADLNI), and 802 to 833 (DGDTPLHEALRHHTLSQLKQLQDVEGFGKLLM). The interval 890-919 (TDDSELPGNVAGTSSSARARAASGSLNQSS) is disordered. The span at 900–914 (AGTSSSARARAASGS) shows a compositional bias: low complexity. 2 RING-type zinc fingers span residues 970–1005 (CLVCSDAKRDTVFKPCGHVSCCETCAPRVKKCLICR) and 1017–1052 (CLVCSDRRAAVFFRPCGHMVACEHCSALMKKCVLCR). Positions 1159-1181 (VNNFQMDDVQKLKQQLQDIKEQT) form a coiled coil. The RING-type 3 zinc-finger motif lies at 1183 to 1216 (CPVCFDRIKNMVFLCGHGTCQMCGDQIEGCPICR).

As to quaternary structure, interacts with intracellular domain of Dl and Ser. In terms of tissue distribution, ubiquitous in the wing imaginal disk (at protein level).

The protein resides in the cytoplasm. The protein localises to the cell cortex. The enzyme catalyses S-ubiquitinyl-[E2 ubiquitin-conjugating enzyme]-L-cysteine + [acceptor protein]-L-lysine = [E2 ubiquitin-conjugating enzyme]-L-cysteine + N(6)-ubiquitinyl-[acceptor protein]-L-lysine.. The protein operates within protein modification; protein ubiquitination. In terms of biological role, E3 ubiquitin-protein ligase that mediates ubiquitination of Delta (Dl) and Serrate (Ser) receptors, which act as ligands of Notch proteins. Positively regulates the Notch signaling by ubiquitinating the intracellular domain of Dl and Ser, leading to endocytosis of Dl and Ser receptors. Regulates a subset of Notch signaling events, including wing margin specification, leg segmentation and vein determination, that are distinct from those events requiring neuralize (neur) activity. Also modulates lateral inhibition, a neur- and Dl-dependent signaling event, suggesting a distinct but partially complementary function with neur. In Drosophila melanogaster (Fruit fly), this protein is E3 ubiquitin-protein ligase mind-bomb (mib1).